The chain runs to 67 residues: Conotoxin TsMMSK-B022 (67 aa).

A signal peptide spans 1-22; it reads MMSKLGVLLTICLLLFPLTAVS. Positions 23-50 are excised as a propeptide; it reads LDGDQPADLPELRAQDFAPERSPWFDPV. 3 disulfide bridges follow: Cys53–Cys65, Cys54–Cys61, and Cys58–Cys64. Pro63 is modified (4-hydroxyproline).

This sequence belongs to the conotoxin M superfamily. As to expression, expressed by the venom duct.

The protein resides in the secreted. This is Conotoxin TsMMSK-B022 from Conus tessulatus (Tessellate cone).